The sequence spans 261 residues: Indole-3-glycerol phosphate synthase (261 aa).

This sequence belongs to the TrpC family.

It carries out the reaction 1-(2-carboxyphenylamino)-1-deoxy-D-ribulose 5-phosphate + H(+) = (1S,2R)-1-C-(indol-3-yl)glycerol 3-phosphate + CO2 + H2O. The protein operates within amino-acid biosynthesis; L-tryptophan biosynthesis; L-tryptophan from chorismate: step 4/5. This chain is Indole-3-glycerol phosphate synthase, found in Burkholderia cenocepacia (strain HI2424).